The primary structure comprises 423 residues: Gamma-glutamyl phosphate reductase (423 aa).

Belongs to the gamma-glutamyl phosphate reductase family.

The protein resides in the cytoplasm. It catalyses the reaction L-glutamate 5-semialdehyde + phosphate + NADP(+) = L-glutamyl 5-phosphate + NADPH + H(+). The protein operates within amino-acid biosynthesis; L-proline biosynthesis; L-glutamate 5-semialdehyde from L-glutamate: step 2/2. Functionally, catalyzes the NADPH-dependent reduction of L-glutamate 5-phosphate into L-glutamate 5-semialdehyde and phosphate. The product spontaneously undergoes cyclization to form 1-pyrroline-5-carboxylate. This Brucella suis (strain ATCC 23445 / NCTC 10510) protein is Gamma-glutamyl phosphate reductase.